We begin with the raw amino-acid sequence, 63 residues long: Small ribosomal subunit protein bS21 (63 aa).

Belongs to the bacterial ribosomal protein bS21 family.

This Bacteroides fragilis (strain ATCC 25285 / DSM 2151 / CCUG 4856 / JCM 11019 / LMG 10263 / NCTC 9343 / Onslow / VPI 2553 / EN-2) protein is Small ribosomal subunit protein bS21.